A 441-amino-acid polypeptide reads, in one-letter code: Chromosomal replication initiator protein DnaA (441 aa).

Residues 1-71 form a domain I, interacts with DnaA modulators region; that stretch reads MDIRWEEILE…AVYQVVGDRF (71 aa). The domain II stretch occupies residues 71–99; that stretch reads FKVSILTESETSSHVLKEVIQSKFDDSDS. Positions 100–318 are domain III, AAA+ region; the sequence is DLNPEYIFSN…GIVNDLVMYK (219 aa). ATP-binding residues include Gly-143, Gly-145, Lys-146, and Thr-147. The domain IV, binds dsDNA stretch occupies residues 319-441; that stretch reads KAYEYFLLTE…HTIKHKISFQ (123 aa).

Belongs to the DnaA family. As to quaternary structure, oligomerizes as a right-handed, spiral filament on DNA at oriC.

The protein localises to the cytoplasm. Functionally, plays an essential role in the initiation and regulation of chromosomal replication. ATP-DnaA binds to the origin of replication (oriC) to initiate formation of the DNA replication initiation complex once per cell cycle. Binds the DnaA box (a 9 base pair repeat at the origin) and separates the double-stranded (ds)DNA. Forms a right-handed helical filament on oriC DNA; dsDNA binds to the exterior of the filament while single-stranded (ss)DNA is stabiized in the filament's interior. The ATP-DnaA-oriC complex binds and stabilizes one strand of the AT-rich DNA unwinding element (DUE), permitting loading of DNA polymerase. After initiation quickly degrades to an ADP-DnaA complex that is not apt for DNA replication. Binds acidic phospholipids. The sequence is that of Chromosomal replication initiator protein DnaA from Leptospira biflexa serovar Patoc (strain Patoc 1 / Ames).